A 92-amino-acid polypeptide reads, in one-letter code: MKKETWRLVAHGRVQGVGYRAACADAADDLELGGWVRNRLDGTVEVMAHGTVRQLEALQAWMEQGPPAAQVTLVEVGPGEGEFAGFEFRPTI.

In terms of domain architecture, Acylphosphatase-like spans 5–90 (TWRLVAHGRV…GEFAGFEFRP (86 aa)). Catalysis depends on residues arginine 20 and asparagine 38.

Belongs to the acylphosphatase family.

It carries out the reaction an acyl phosphate + H2O = a carboxylate + phosphate + H(+). The protein is Acylphosphatase (acyP) of Cupriavidus necator (strain ATCC 17699 / DSM 428 / KCTC 22496 / NCIMB 10442 / H16 / Stanier 337) (Ralstonia eutropha).